Reading from the N-terminus, the 395-residue chain is Formate-dependent phosphoribosylglycinamide formyltransferase (395 aa).

N(1)-(5-phospho-beta-D-ribosyl)glycinamide is bound by residues 22-23 (EL) and Glu-82. ATP is bound by residues Arg-115, Lys-156, 161 to 166 (SSGKGQ), 196 to 199 (EGFI), and Glu-204. One can recognise an ATP-grasp domain in the interval 120-309 (RLAAETLGLP…EFALHARAIL (190 aa)). Glu-268 and Glu-280 together coordinate Mg(2+). N(1)-(5-phospho-beta-D-ribosyl)glycinamide-binding positions include Asp-287, Lys-356, and 363 to 364 (RR).

It belongs to the PurK/PurT family. In terms of assembly, homodimer.

It catalyses the reaction N(1)-(5-phospho-beta-D-ribosyl)glycinamide + formate + ATP = N(2)-formyl-N(1)-(5-phospho-beta-D-ribosyl)glycinamide + ADP + phosphate + H(+). Its pathway is purine metabolism; IMP biosynthesis via de novo pathway; N(2)-formyl-N(1)-(5-phospho-D-ribosyl)glycinamide from N(1)-(5-phospho-D-ribosyl)glycinamide (formate route): step 1/1. Involved in the de novo purine biosynthesis. Catalyzes the transfer of formate to 5-phospho-ribosyl-glycinamide (GAR), producing 5-phospho-ribosyl-N-formylglycinamide (FGAR). Formate is provided by PurU via hydrolysis of 10-formyl-tetrahydrofolate. In Stenotrophomonas maltophilia (strain R551-3), this protein is Formate-dependent phosphoribosylglycinamide formyltransferase.